The sequence spans 293 residues: MFLRRLGGWLPRPWGRKKSTKTDLPAPEPRWVDSSPENSGSDWDSAPETMGDVGPLKTKDSGTRRPPQAAPESSRDTRVYQLGSKRMDSLKKDKAASAIQESARLETGGAVPKLDLDPVDSGGMKNLGVSPQGRLGTTGPEALLEKPGRRQKLLRWLRGEPGAPSHYLQDPEEYLQISTNLTLHLLELLASALLALCSRPLRAILDALGLRGPVGLWLHGLLCFLAALHGLHAVLSLLTAHPLHFACLFGLLQALVLAVSLREPVEDEETADWESEGQGKEAKEQTEGPGRAL.

Disordered stretches follow at residues 1–95 (MFLR…KDKA) and 268–293 (EETADWESEGQGKEAKEQTEGPGRAL). Phosphoserine occurs at positions 34, 35, and 89. Composition is skewed to basic and acidic residues over residues 85–95 (KRMDSLKKDKA) and 277–286 (GQGKEAKEQT).

This is an uncharacterized protein from Rattus norvegicus (Rat).